The chain runs to 88 residues: Small ribosomal subunit protein uS12 (88 aa).

The segment at 1–24 is disordered; it reads RKGRRDKIGKVKTAALKGSPQRRG. Asp81 carries the 3-methylthioaspartic acid modification.

This sequence belongs to the universal ribosomal protein uS12 family. Part of the 30S ribosomal subunit. Contacts proteins S8 and S17. May interact with IF1 in the 30S initiation complex.

Functionally, with S4 and S5 plays an important role in translational accuracy. In terms of biological role, interacts with and stabilizes bases of the 16S rRNA that are involved in tRNA selection in the A site and with the mRNA backbone. Located at the interface of the 30S and 50S subunits, it traverses the body of the 30S subunit contacting proteins on the other side and probably holding the rRNA structure together. The combined cluster of proteins S8, S12 and S17 appears to hold together the shoulder and platform of the 30S subunit. The sequence is that of Small ribosomal subunit protein uS12 (rpsL) from Mycobacterium szulgai.